Consider the following 138-residue polypeptide: Nucleoside diphosphate kinase (138 aa).

Lys9, Phe57, Arg85, Thr91, Arg102, and Asn112 together coordinate ATP. The active-site Pros-phosphohistidine intermediate is His115.

Belongs to the NDK family. As to quaternary structure, homotetramer. It depends on Mg(2+) as a cofactor.

It is found in the cytoplasm. The catalysed reaction is a 2'-deoxyribonucleoside 5'-diphosphate + ATP = a 2'-deoxyribonucleoside 5'-triphosphate + ADP. The enzyme catalyses a ribonucleoside 5'-diphosphate + ATP = a ribonucleoside 5'-triphosphate + ADP. Major role in the synthesis of nucleoside triphosphates other than ATP. The ATP gamma phosphate is transferred to the NDP beta phosphate via a ping-pong mechanism, using a phosphorylated active-site intermediate. The polypeptide is Nucleoside diphosphate kinase (Exiguobacterium sibiricum (strain DSM 17290 / CCUG 55495 / CIP 109462 / JCM 13490 / 255-15)).